The chain runs to 693 residues: UvrABC system protein C (693 aa).

In terms of domain architecture, GIY-YIG spans 16–95; that stretch reads DAPGVYRFRD…IKEFDPRFNV (80 aa). The UVR domain occupies 208 to 243; the sequence is GVFLRRLESEMAAASAELDFERAARVRDDINALRRV. The segment at 656–693 is disordered; that stretch reads APSPDDATTEPGAVGEPGTADGAAADPDGRDAVVVPEG. Positions 672–693 are enriched in low complexity; sequence PGTADGAAADPDGRDAVVVPEG.

This sequence belongs to the UvrC family. As to quaternary structure, interacts with UvrB in an incision complex.

It is found in the cytoplasm. The UvrABC repair system catalyzes the recognition and processing of DNA lesions. UvrC both incises the 5' and 3' sides of the lesion. The N-terminal half is responsible for the 3' incision and the C-terminal half is responsible for the 5' incision. In Beutenbergia cavernae (strain ATCC BAA-8 / DSM 12333 / CCUG 43141 / JCM 11478 / NBRC 16432 / NCIMB 13614 / HKI 0122), this protein is UvrABC system protein C.